The following is a 160-amino-acid chain: Cyclic pyranopterin monophosphate synthase (160 aa).

Substrate contacts are provided by residues 77–79 and 114–115; these read MCH and ME. D129 is a catalytic residue.

It belongs to the MoaC family. In terms of assembly, homohexamer; trimer of dimers.

It catalyses the reaction (8S)-3',8-cyclo-7,8-dihydroguanosine 5'-triphosphate = cyclic pyranopterin phosphate + diphosphate. It functions in the pathway cofactor biosynthesis; molybdopterin biosynthesis. In terms of biological role, catalyzes the conversion of (8S)-3',8-cyclo-7,8-dihydroguanosine 5'-triphosphate to cyclic pyranopterin monophosphate (cPMP). The protein is Cyclic pyranopterin monophosphate synthase of Listeria monocytogenes serotype 4b (strain F2365).